We begin with the raw amino-acid sequence, 116 residues long: Non-specific lipid-transfer protein 8 (116 aa).

The first 24 residues, 1–24 (MNVLKCLAIISVLGIFFIPRYSES), serve as a signal peptide directing secretion. Cystine bridges form between Cys28-Cys76, Cys38-Cys53, Cys54-Cys98, and Cys74-Cys112.

It belongs to the plant LTP family.

Functionally, plant non-specific lipid-transfer proteins transfer phospholipids as well as galactolipids across membranes. May play a role in wax or cutin deposition in the cell walls of expanding epidermal cells and certain secretory tissues. This is Non-specific lipid-transfer protein 8 (LTP8) from Arabidopsis thaliana (Mouse-ear cress).